Here is a 226-residue protein sequence, read N- to C-terminus: Probable proteasome subunit beta type-7 (226 aa).

This sequence belongs to the peptidase T1B family. As to quaternary structure, the 26S proteasome consists of a 20S proteasome core and two 19S regulatory subunits. The 20S proteasome core is composed of 28 subunits that are arranged in four stacked rings, resulting in a barrel-shaped structure. The two end rings are each formed by seven alpha subunits, and the two central rings are each formed by seven beta subunits. The catalytic chamber with the active sites is on the inside of the barrel.

The protein resides in the cytoplasm. The protein localises to the nucleus. Functionally, non-catalytic component of the proteasome which degrades poly-ubiquitinated proteins in the cytoplasm and in the nucleus. It is essential for the regulated turnover of proteins and for the removal of misfolded proteins. The proteasome is a multicatalytic proteinase complex that is characterized by its ability to cleave peptides with Arg, Phe, Tyr, Leu, and Glu adjacent to the leaving group at neutral or slightly basic pH. It has an ATP-dependent proteolytic activity. The sequence is that of Probable proteasome subunit beta type-7 (PRE4) from Encephalitozoon cuniculi (strain GB-M1) (Microsporidian parasite).